Reading from the N-terminus, the 546-residue chain is Probable protein kinase UbiB (546 aa).

Residues 124 to 502 form the Protein kinase domain; the sequence is DFEIKPLASA…HVRQGQSRYF (379 aa). Residues 130 to 138 and lysine 153 contribute to the ATP site; that span reads LASASIAQV. Residue aspartate 288 is the Proton acceptor of the active site. A run of 2 helical transmembrane segments spans residues 501–521 and 522–542; these read YFLG…VSRP and EWGL…FVGW.

The protein belongs to the ABC1 family. UbiB subfamily.

It is found in the cell inner membrane. It participates in cofactor biosynthesis; ubiquinone biosynthesis [regulation]. Functionally, is probably a protein kinase regulator of UbiI activity which is involved in aerobic coenzyme Q (ubiquinone) biosynthesis. The polypeptide is Probable protein kinase UbiB (Escherichia coli (strain SMS-3-5 / SECEC)).